The primary structure comprises 95 residues: Small ribosomal subunit protein uS19 (95 aa).

The tract at residues 76 to 95 is disordered; it reads PTRRFGGHADKKAKKGELKK. Over residues 82-95 the composition is skewed to basic and acidic residues; sequence GHADKKAKKGELKK.

It belongs to the universal ribosomal protein uS19 family.

Functionally, protein S19 forms a complex with S13 that binds strongly to the 16S ribosomal RNA. In Thermotoga neapolitana (strain ATCC 49049 / DSM 4359 / NBRC 107923 / NS-E), this protein is Small ribosomal subunit protein uS19.